The primary structure comprises 1367 residues: DNA polymerase III PolC-type (1367 aa).

The region spanning 358–513 (FVVLDFETTG…DDARVTAQVF (156 aa)) is the Exonuclease domain.

Belongs to the DNA polymerase type-C family. PolC subfamily.

Its subcellular location is the cytoplasm. The catalysed reaction is DNA(n) + a 2'-deoxyribonucleoside 5'-triphosphate = DNA(n+1) + diphosphate. In terms of biological role, required for replicative DNA synthesis. This DNA polymerase also exhibits 3' to 5' exonuclease activity. The chain is DNA polymerase III PolC-type from Thermotoga maritima (strain ATCC 43589 / DSM 3109 / JCM 10099 / NBRC 100826 / MSB8).